A 105-amino-acid chain; its full sequence is Met repressor (105 aa).

Belongs to the MetJ family. As to quaternary structure, homodimer.

Its subcellular location is the cytoplasm. This regulatory protein, when combined with SAM (S-adenosylmethionine) represses the expression of the methionine regulon and of enzymes involved in SAM synthesis. This Yersinia pestis bv. Antiqua (strain Antiqua) protein is Met repressor.